The following is a 101-amino-acid chain: Signal recognition particle 19 kDa protein (101 aa).

This sequence belongs to the SRP19 family. As to quaternary structure, part of the signal recognition particle protein translocation system, which is composed of SRP and FtsY. Archaeal SRP consists of a 7S RNA molecule of 300 nucleotides and two protein subunits: SRP54 and SRP19.

The protein localises to the cytoplasm. Functionally, involved in targeting and insertion of nascent membrane proteins into the cytoplasmic membrane. Binds directly to 7S RNA and mediates binding of the 54 kDa subunit of the SRP. The polypeptide is Signal recognition particle 19 kDa protein (Thermofilum pendens (strain DSM 2475 / Hrk 5)).